We begin with the raw amino-acid sequence, 636 residues long: Topoisomerase I damage affected protein 7 (636 aa).

Polar residues predominate over residues Met-1 to Ile-18. Disordered regions lie at residues Met-1–Ser-33, Thr-87–Pro-109, Asn-246–Asn-271, Pro-299–Thr-326, and Gln-339–Pro-362. Asn-4 carries N-linked (GlcNAc...) asparagine glycosylation. 2 stretches are compositionally biased toward low complexity: residues Ser-19 to Ser-33 and Thr-87 to Asp-108. Asn-257 is a glycosylation site (N-linked (GlcNAc...) asparagine). The helical transmembrane segment at Ile-457–Phe-477 threads the bilayer. Asn-492 carries N-linked (GlcNAc...) asparagine glycosylation. Positions Gln-510–Phe-541 are enriched in polar residues. The segment at Gln-510–Pro-551 is disordered. Residue Lys-512 forms a Glycyl lysine isopeptide (Lys-Gly) (interchain with G-Cter in ubiquitin) linkage. N-linked (GlcNAc...) asparagine glycans are attached at residues Asn-557, Asn-562, and Asn-626. Ser-628 carries the phosphoserine modification.

It belongs to the TDA7 family.

Its subcellular location is the vacuole membrane. In Saccharomyces cerevisiae (strain ATCC 204508 / S288c) (Baker's yeast), this protein is Topoisomerase I damage affected protein 7 (TDA7).